The primary structure comprises 182 residues: ATP-dependent protease subunit HslV (182 aa).

Residue Thr10 is part of the active site. Na(+) is bound by residues Ala166, Cys169, and Ser172.

The protein belongs to the peptidase T1B family. HslV subfamily. As to quaternary structure, a double ring-shaped homohexamer of HslV is capped on each side by a ring-shaped HslU homohexamer. The assembly of the HslU/HslV complex is dependent on binding of ATP.

It is found in the cytoplasm. It carries out the reaction ATP-dependent cleavage of peptide bonds with broad specificity.. Its activity is regulated as follows. Allosterically activated by HslU binding. Protease subunit of a proteasome-like degradation complex believed to be a general protein degrading machinery. The chain is ATP-dependent protease subunit HslV from Rickettsia typhi (strain ATCC VR-144 / Wilmington).